Here is a 42-residue protein sequence, read N- to C-terminus: Small protein MntS (42 aa).

The protein localises to the cytoplasm. Its function is as follows. Required for repression of mntH by MntR. May function as a chaperone that makes manganese more available by delivering it to the necessary cellular locations when manganese is limiting. This is Small protein MntS (mntS) from Escherichia coli (strain K12).